A 50-amino-acid polypeptide reads, in one-letter code: Phospholipase A2 trimorphin (50 aa).

3 residues coordinate Ca(2+): tyrosine 28, glycine 30, and glycine 32. Cysteine 29 and cysteine 45 are joined by a disulfide. The active site involves histidine 48. Aspartate 49 serves as a coordination point for Ca(2+).

Ca(2+) serves as cofactor. As to expression, expressed by the venom gland.

The protein resides in the secreted. It carries out the reaction a 1,2-diacyl-sn-glycero-3-phosphocholine + H2O = a 1-acyl-sn-glycero-3-phosphocholine + a fatty acid + H(+). With respect to regulation, inhibited by EDTA. In terms of biological role, PLA2 catalyzes the calcium-dependent hydrolysis of the 2-acyl groups in 3-sn-phosphoglycerides. The polypeptide is Phospholipase A2 trimorphin (Trimorphodon lambda (Sonoran lyre snake)).